The sequence spans 278 residues: MGSDLTHLEGRPPQRWQWRVFVLAALLSATFAFFTHTCSSPLPQRCRPYLPNVFNKHSLQHNEPEVRDALLAVDSFVRQSFHENPEIDGLVAAVVTANGAIYETALGPLKANETRPEDRGAVDRYSIFRLASGSKLFAMLEILILRERGALQLDDPIAKYLPQFAHKHGGWANEDDIDEGPITIRHLASHMSGMTREYPRGNMDHWPHSLEGIGPPPMNGAPFPDTLEETVLGISHYPLNLPTSTYPVYSNAGMALLGQIAVVANAAAERSQGVDVAR.

A helical transmembrane segment spans residues 20–37 (VFVLAALLSATFAFFTHT). N-linked (GlcNAc...) asparagine glycosylation occurs at asparagine 112.

This sequence belongs to the beta-lactamase family.

The protein resides in the membrane. The protein operates within mycotoxin biosynthesis. In terms of biological role, beta-lactamase-like protein; part of the gene cluster that mediates the biosynthesis of strobilurin A, an antifungal polyketide that contains a key beta-methoxyacrylate toxophore that targets the complex III of the mitochondrial electron transport chain. Strobilurin biosynthesis begins with construction of benzoyl CoA by step-wise elimination of ammonia from phenylalanine by the phenylalanine ammonia-lyase str11, oxygenation by str8 and retro-Claisen reaction to form benzoic acid, which is activated to its CoA thiolester benzoyl CoA by the dedicated CoA ligase str10. Benzoyl CoA forms the starter unit for the highly reducing polyketide synthase stpks1 that produces the polyketide prestrobilutin A. The FAD-dependent oxygenase str9 then catalyzes the key oxidative rearrangement responsible for the creation of the beta-methoxyacrylate toxophore. Str9 performs epoxidation of the 2,3 olefin of prestrobilutin A, followed by Meinwald rearrangement to furnish the aldehyde intermediate. Rapid enolization of the aldehyde intermediate would give the beta-methoxyacrylate skeleton and methylations catalyzed by str2 and str3 complete the synthesis and lead to the production of strobilurin A. The short-chain dehydrogenase stl2 and the dehydrogenase str4 play a role in the shunt pathway leading to the production of bolineol. The cluster encodes no obvious halogenase gene that could be involved in production of strobilurin B, nor any obvious dimethylallyl-transferase that could be involved in the production of strobilurin G. It is possible that unknown proteins encoded in, or near, the cluster (such as str1 or stl1) may form new classes of halogenases or dimethylally-transferases, or that the responsible genes are located elsewhere on the genome. Similarly, proteins encoded by str5/str6 hydrolases appear to have no chemical role in the biosynthesis of strobilurin A. Finally, no obvious self-resistance gene is found within the cluster. This Strobilurus tenacellus protein is Beta-lactamase-like protein str5.